A 332-amino-acid chain; its full sequence is Cysteine and histidine-rich domain-containing protein 1 (332 aa).

At A2 the chain carries N-acetylalanine. The interaction with PPP5C stretch occupies residues 2–77 (ALLCYNRGCG…KPPEPVKPEV (76 aa)). Zn(2+) is bound by residues C5, C10, C24, H27, C42, and C43. 2 CHORD domains span residues 5–64 (CYNR…KGRH) and 157–216 (CKNG…TGKH). At T47 the chain carries Phosphothreonine. S51 is modified (phosphoserine). Zn(2+) is bound by residues C59, H64, C157, C162, C176, H179, C194, C195, C211, and H216. A disordered region spans residues 61-82 (KGRHNSEKPPEPVKPEVKTTEK). A compositionally biased stretch (basic and acidic residues) spans 64 to 82 (HNSEKPPEPVKPEVKTTEK). Positions 65–316 (NSEKPPEPVK…AEPMQWASLE (252 aa)) are interaction with HSP90AA1 and HSP90AB1. The region spanning 227–316 (VVPCRHDWHQ…AEPMQWASLE (90 aa)) is the CS domain.

As to quaternary structure, interacts with HSP90AA1, HSP90AB1, PPP5C, ROCK1 and ROCK2.

In terms of biological role, regulates centrosome duplication, probably by inhibiting the kinase activity of ROCK2. Proposed to act as co-chaperone for HSP90. May play a role in the regulation of NOD1 via a HSP90 chaperone complex. In vitro, has intrinsic chaperone activity. This function may be achieved by inhibiting association of ROCK2 with NPM1. Plays a role in ensuring the localization of the tyrosine kinase receptor EGFR to the plasma membrane, and thus ensures the subsequent regulation of EGFR activity and EGF-induced actin cytoskeleton remodeling. Involved in stress response. Prevents tumorigenesis. The sequence is that of Cysteine and histidine-rich domain-containing protein 1 (CHORDC1) from Sus scrofa (Pig).